The chain runs to 158 residues: NAD(P)H-quinone oxidoreductase subunit J, chloroplastic (158 aa).

Belongs to the complex I 30 kDa subunit family. NDH is composed of at least 16 different subunits, 5 of which are encoded in the nucleus.

The protein localises to the plastid. It is found in the chloroplast thylakoid membrane. The enzyme catalyses a plastoquinone + NADH + (n+1) H(+)(in) = a plastoquinol + NAD(+) + n H(+)(out). It catalyses the reaction a plastoquinone + NADPH + (n+1) H(+)(in) = a plastoquinol + NADP(+) + n H(+)(out). Its function is as follows. NDH shuttles electrons from NAD(P)H:plastoquinone, via FMN and iron-sulfur (Fe-S) centers, to quinones in the photosynthetic chain and possibly in a chloroplast respiratory chain. The immediate electron acceptor for the enzyme in this species is believed to be plastoquinone. Couples the redox reaction to proton translocation, and thus conserves the redox energy in a proton gradient. In Oenothera argillicola (Appalachian evening primrose), this protein is NAD(P)H-quinone oxidoreductase subunit J, chloroplastic.